We begin with the raw amino-acid sequence, 508 residues long: Cytochrome P450 monooxygenase pkfB (508 aa).

A helical transmembrane segment spans residues 9–29; it reads FSLGLSQILVCLALLYAAIHI. N-linked (GlcNAc...) asparagine glycans are attached at residues Asn-57 and Asn-305. Cys-450 is a heme binding site.

Belongs to the cytochrome P450 family. Heme is required as a cofactor.

It localises to the membrane. The protein operates within secondary metabolite biosynthesis. Its function is as follows. Cytochrome P450 monooxygenase; part of the gene cluster that mediates the biosynthesis of aspernidine A, a prenylated isoindolinone. The starting point of the biosynthesis of aspernidin A is the production of orsellinaldehyde by the non-reducing polyketide synthase pkfA. Hydroxylation, methylation of one of the phenol groups, and prenylation, presumably catalyzed by the prenyltransferase pkfE, would be needed to yield aspernidine D. Subsequently, the cytochrome P450 monooxygenase pkfB is responsible for hydroxylation of aspernidine D to yield aspernidine E. The dehydrogenase pkfF may be responsible for further oxidation of aspernidine E to form a dialdehyde intermediate which is further transformed in a series of steps, some of which are enzyme-mediated, to generate aspernidine A. The possibility that additional enzymes outside of the cluster are involved in aspernidine A biosynthesis cannot be excluded. The polypeptide is Cytochrome P450 monooxygenase pkfB (Emericella nidulans (strain FGSC A4 / ATCC 38163 / CBS 112.46 / NRRL 194 / M139) (Aspergillus nidulans)).